The sequence spans 193 residues: Interferon type A3 (193 aa).

The N-terminal stretch at 1–31 (MAVPASPQHPRGYGILLLTLLLKALATTASA) is a signal peptide. 3 disulfide bridges follow: Cys32–Cys129, Cys61–Cys155, and Cys68–Cys168. 4 N-linked (GlcNAc...) asparagine glycosylation sites follow: Asn65, Asn71, Asn108, and Asn186.

This sequence belongs to the alpha/beta interferon family.

It is found in the secreted. Has antiviral activities. The sequence is that of Interferon type A3 (IFNA3) from Gallus gallus (Chicken).